We begin with the raw amino-acid sequence, 688 residues long: Probable xyloglucan glycosyltransferase 7 (688 aa).

The tract at residues 1–25 is disordered; it reads MAPSWWGRSGGGGVGNGGGTPVVVK. Gly residues predominate over residues 8–20; that stretch reads RSGGGGVGNGGGT. The next 2 helical transmembrane spans lie at 121-141 and 183-203; these read VSLVLSLLLLAVEVAAYLQGW and VALFMVQSIDRLVLCLGCFWI. D269 is a catalytic residue. Positions 328 and 330 each coordinate substrate. D422 is a catalytic residue. Helical transmembrane passes span 500–520 and 525–545; these read LILPFYSFTLFCVILPMTMFV and LPAWVVCYIPATMSILNILPA. A disordered region spans residues 604-635; the sequence is HSKQQRVGSAPNLDALTKEESNPKKDSKKKKH. Positions 619 to 628 are enriched in basic and acidic residues; it reads LTKEESNPKK. 2 helical membrane passes run 638 to 657 and 663 to 683; these read IYRKELALSFLLLTAAARSL and IHFYFLLFQGVSFLVVGLDLI.

Belongs to the glycosyltransferase 2 family. Plant cellulose synthase-like C subfamily.

The protein resides in the golgi apparatus membrane. In terms of biological role, probable beta-1,4-glucan synthase rather involved in the synthesis of the xyloglucan backbone than cellulose. Seems to work simultaneously with xyloglucan 6-xylosyltransferase. Xyloglucan is a noncellulosic polysaccharides of plant cell wall and consists of a glucan backbone substituted by xylose, galactose and fucose. The protein is Probable xyloglucan glycosyltransferase 7 (CSLC7) of Oryza sativa subsp. japonica (Rice).